A 383-amino-acid chain; its full sequence is MELEIITEGRTPLKVPKTRGQPSARDPVFYNPAMQLSRDLTVSSLVQYGPKIVCDPLAGVGARGIRIAVELSPEVVVLNDLNPRAVELIEENVRLNDVEDVCRIENRDANALMHEDELAGRFDYVDIDPFGPPVPFLDAAVRTVRNRGVVGISATDVSALAGRYPRSARRKYWVEVERVEFYQEVAIRALISYIVRTCAKYDLAFEPHIAFFQRHHVRVIGEIRRGARRADRALKRLGYLLHCRECGYTSEREFDRECPRCGSGSVVRLGPLWLPDFADRERAERAASDARELGLEEAAELLETVAKETGTNPWAYDIHRWASRLGLSRVPSLTSVLEGLREEGFNAVRPHYSKRAVVKTDASPEEFEAVLTEVAGDSGCLHR.

The 368-residue stretch at 4-371 (EIITEGRTPL…ASPEEFEAVL (368 aa)) folds into the Trm1 methyltransferase domain. Positions 38, 63, 80, 108, and 109 each coordinate S-adenosyl-L-methionine. Residues Cys-243, Cys-246, Cys-258, and Cys-261 each coordinate Zn(2+).

The protein belongs to the class I-like SAM-binding methyltransferase superfamily. Trm1 family.

It catalyses the reaction guanosine(26) in tRNA + 2 S-adenosyl-L-methionine = N(2)-dimethylguanosine(26) in tRNA + 2 S-adenosyl-L-homocysteine + 2 H(+). Functionally, dimethylates a single guanine residue at position 26 of a number of tRNAs using S-adenosyl-L-methionine as donor of the methyl groups. The chain is tRNA (guanine(26)-N(2))-dimethyltransferase from Methanopyrus kandleri (strain AV19 / DSM 6324 / JCM 9639 / NBRC 100938).